A 98-amino-acid chain; its full sequence is Dehydrogenase acuH (98 aa).

It participates in secondary metabolite biosynthesis. Its function is as follows. Dehydrogenase; part of the gene cluster that mediates the biosynthesis of aculins. The pathway begins with the synthesis of 6-methylsalicylic acid by the polyketide synthase (PKS) acuA via condensation of acetate and malonate units. The 6-methylsalicylic acid decarboxylase acuB then catalyzes the decarboxylation of 6-methylsalicylic acid to yield m-cresol (also known as 3-methylphenol). These first reactions occur in the cytosol. The intermediate m-cresol is then transported into the endoplasmic reticulum where the cytochrome P450 monooxygenase acuC converts it to m-hydroxybenzyl alcohol, which is further converted to gentisyl alcohol by the cytochrome P450 monooxygenase acuD. Gentisyl alcohol is further oxidized by the oxidoreductase acuE that probably catalyzes hydroxylation of the aromatic ring. The aromatic system might then be opened by oxidation through a Baeyer-Villiger type of oxidation, which could be catalyzed by acuF, with the carboxylic acid at C-1 subsequently reduced to an aldehyde by acuG. Subsequently, a hemiacetal is formed, before the dehydrogenase acuH would reduce the double bond between C-4 and C-6. Finally, keto-enol tautomerism results in formation of aculinic acid, which exists as two diastereomers (both R/S configurations at C-1) by non-enzymatic hemiacetal formation. The carboxypeptidase acuI could be involved in the linking of aculinic acid to an aculene A moiety produced by the aculene biosynthesis cluster and which leads to the production of aculin A. AcuI may also be involved in the attachment of proline to aculinic acid to form epi-aculins A and B. In Aspergillus aculeatus (strain ATCC 16872 / CBS 172.66 / WB 5094), this protein is Dehydrogenase acuH.